The primary structure comprises 262 residues: Ribosome-recycling factor, mitochondrial (262 aa).

A mitochondrion-targeting transit peptide spans 1–55 (MALGLRCFRLVHPAFCNSLAALTRPVSEVTLQTVRGRQNDHGQCMAYAAVPVRHF).

The protein belongs to the RRF family.

The protein resides in the mitochondrion. Functionally, responsible for the disassembly of ribosomes from messenger RNA at the termination of mitochondrial protein biosynthesis. Acts in collaboration with GFM2. Promotes mitochondrial ribosome recycling by dissolution of intersubunit contacts. The protein is Ribosome-recycling factor, mitochondrial (MRRF) of Bos taurus (Bovine).